Here is a 375-residue protein sequence, read N- to C-terminus: Decapping and exoribonuclease protein Rai1 (375 aa).

Residues Arg43 and 120–122 (LRG) contribute to the substrate site. Positions 180, 222, 224, 247, and 248 each coordinate Mg(2+). Glu222 provides a ligand contact to substrate. Substrate contacts are provided by Lys249 and Gln274.

It belongs to the DXO/Dom3Z family. As to quaternary structure, interacts with Rat1. Requires Mg(2+) as cofactor.

It catalyses the reaction a 5'-end triphospho-ribonucleoside in mRNA + H2O = a 5'-end phospho-ribonucleoside in mRNA + diphosphate + H(+). The catalysed reaction is a 5'-end NAD(+)-phospho-ribonucleoside in mRNA + H2O = a 5'-end phospho-ribonucleoside in mRNA + NAD(+) + H(+). The enzyme catalyses a 5'-end (N(7)-methyl 5'-triphosphoguanosine)-ribonucleoside-ribonucleotide in mRNA + H2O = a (N(7)-methyl 5'-triphosphoguanosine)-nucleoside + a 5'-end phospho-ribonucleoside in mRNA + H(+). Functionally, decapping enzyme for NAD-capped RNAs: specifically hydrolyzes the nicotinamide adenine dinucleotide (NAD) cap from a subset of RNAs by removing the entire NAD moiety from the 5'-end of an NAD-capped RNA. The NAD-cap is present at the 5'-end of some RNAs and snoRNAs. In contrast to the canonical 5'-end N7 methylguanosine (m7G) cap, the NAD cap promotes mRNA decay. Also acts as a non-canonical decapping enzyme that removes the entire cap structure of m7G capped or incompletely capped RNAs and mediates their subsequent degradation. Specifically degrades pre-mRNAs with a defective 5'-end m7G cap and is part of a pre-mRNA capping quality control. Possesses 5'-pyrophosphohydrolase activity, hydrolyzing the 5'-end triphosphate to release pyrophosphates, and 5'-3' exonuclease activity. May be involved in RNA degradation in the nucleus. The polypeptide is Decapping and exoribonuclease protein Rai1 (Drosophila melanogaster (Fruit fly)).